A 454-amino-acid polypeptide reads, in one-letter code: 3-phosphoshikimate 1-carboxyvinyltransferase (454 aa).

Lysine 39, serine 40, and arginine 44 together coordinate 3-phosphoshikimate. Residue lysine 39 coordinates phosphoenolpyruvate. Residues glycine 112 and arginine 140 each coordinate phosphoenolpyruvate. 4 residues coordinate 3-phosphoshikimate: serine 185, glutamine 187, aspartate 333, and lysine 360. Glutamine 187 is a phosphoenolpyruvate binding site. Aspartate 333 serves as the catalytic Proton acceptor. Phosphoenolpyruvate contacts are provided by arginine 364 and arginine 405.

Belongs to the EPSP synthase family. As to quaternary structure, monomer.

The protein localises to the cytoplasm. The catalysed reaction is 3-phosphoshikimate + phosphoenolpyruvate = 5-O-(1-carboxyvinyl)-3-phosphoshikimate + phosphate. It functions in the pathway metabolic intermediate biosynthesis; chorismate biosynthesis; chorismate from D-erythrose 4-phosphate and phosphoenolpyruvate: step 6/7. Functionally, catalyzes the transfer of the enolpyruvyl moiety of phosphoenolpyruvate (PEP) to the 5-hydroxyl of shikimate-3-phosphate (S3P) to produce enolpyruvyl shikimate-3-phosphate and inorganic phosphate. The polypeptide is 3-phosphoshikimate 1-carboxyvinyltransferase (Xylella fastidiosa (strain 9a5c)).